Reading from the N-terminus, the 186-residue chain is Outer-membrane lipoprotein LolB (186 aa).

The N-terminal stretch at 1–16 is a signal peptide; the sequence is MRRLAVIASLAWALGG. A lipid anchor (N-palmitoyl cysteine) is attached at Cys17. Cys17 carries the S-diacylglycerol cysteine lipid modification.

The protein belongs to the LolB family. As to quaternary structure, monomer.

It localises to the cell outer membrane. Plays a critical role in the incorporation of lipoproteins in the outer membrane after they are released by the LolA protein. This chain is Outer-membrane lipoprotein LolB, found in Thiobacillus denitrificans (strain ATCC 25259 / T1).